The primary structure comprises 113 residues: uncharacterized protein (113 aa).

The protein localises to the mitochondrion. This is an uncharacterized protein from Paramecium tetraurelia.